The primary structure comprises 206 residues: D-ribitol-5-phosphate phosphatase (206 aa).

The active-site Nucleophile is the Asp-8. Mg(2+) contacts are provided by Asp-8 and Asp-172.

The protein belongs to the HAD-like hydrolase superfamily. Mg(2+) serves as cofactor.

It carries out the reaction D-ribitol 1-phosphate + H2O = ribitol + phosphate. The catalysed reaction is D-ribitol 5-phosphate + H2O = ribitol + phosphate. The enzyme catalyses 5-amino-6-(5-phospho-D-ribitylamino)uracil + H2O = 5-amino-6-(D-ribitylamino)uracil + phosphate. Its pathway is cofactor biosynthesis; riboflavin biosynthesis; 5-amino-6-(D-ribitylamino)uracil from GTP: step 4/4. Its function is as follows. Catalyzes the dephosphorylation of D-ribitol-5-phosphate and D-ribitol-1-phosphate. Is also able to dephosphorylate 5-amino-6-(5-phospho-D-ribitylamino)uracil, and thus could be involved in the riboflavin biosynthesis pathway. The polypeptide is D-ribitol-5-phosphate phosphatase (Bacteroides thetaiotaomicron (strain ATCC 29148 / DSM 2079 / JCM 5827 / CCUG 10774 / NCTC 10582 / VPI-5482 / E50)).